We begin with the raw amino-acid sequence, 136 residues long: UPF0310 protein HH_1062 (136 aa).

The protein belongs to the UPF0310 family.

The protein is UPF0310 protein HH_1062 of Helicobacter hepaticus (strain ATCC 51449 / 3B1).